Consider the following 292-residue polypeptide: Pyridoxal 5'-phosphate synthase subunit PdxS (292 aa).

Residue D22 coordinates D-ribose 5-phosphate. K79 (schiff-base intermediate with D-ribose 5-phosphate) is an active-site residue. G151 contacts D-ribose 5-phosphate. D-glyceraldehyde 3-phosphate is bound at residue R163. Residues G212 and 233–234 (GS) each bind D-ribose 5-phosphate.

It belongs to the PdxS/SNZ family. In terms of assembly, in the presence of PdxT, forms a dodecamer of heterodimers.

It catalyses the reaction aldehydo-D-ribose 5-phosphate + D-glyceraldehyde 3-phosphate + L-glutamine = pyridoxal 5'-phosphate + L-glutamate + phosphate + 3 H2O + H(+). Its pathway is cofactor biosynthesis; pyridoxal 5'-phosphate biosynthesis. In terms of biological role, catalyzes the formation of pyridoxal 5'-phosphate from ribose 5-phosphate (RBP), glyceraldehyde 3-phosphate (G3P) and ammonia. The ammonia is provided by the PdxT subunit. Can also use ribulose 5-phosphate and dihydroxyacetone phosphate as substrates, resulting from enzyme-catalyzed isomerization of RBP and G3P, respectively. This Thermoanaerobacter sp. (strain X514) protein is Pyridoxal 5'-phosphate synthase subunit PdxS.